Here is a 102-residue protein sequence, read N- to C-terminus: Small ribosomal subunit protein uS10 (102 aa).

This sequence belongs to the universal ribosomal protein uS10 family. Part of the 30S ribosomal subunit.

Involved in the binding of tRNA to the ribosomes. This chain is Small ribosomal subunit protein uS10, found in Mycoplasma mobile (strain ATCC 43663 / 163K / NCTC 11711) (Mesomycoplasma mobile).